The sequence spans 704 residues: Elongation factor G (704 aa).

A tr-type G domain is found at 8-291 (DKVRNIGIMA…TVVECLPSPV (284 aa)). Residues 17 to 24 (AHIDAGKT), 90 to 94 (DTPGH), and 144 to 147 (NKMD) each bind GTP.

Belongs to the TRAFAC class translation factor GTPase superfamily. Classic translation factor GTPase family. EF-G/EF-2 subfamily.

The protein localises to the cytoplasm. Its function is as follows. Catalyzes the GTP-dependent ribosomal translocation step during translation elongation. During this step, the ribosome changes from the pre-translocational (PRE) to the post-translocational (POST) state as the newly formed A-site-bound peptidyl-tRNA and P-site-bound deacylated tRNA move to the P and E sites, respectively. Catalyzes the coordinated movement of the two tRNA molecules, the mRNA and conformational changes in the ribosome. The protein is Elongation factor G of Prosthecochloris aestuarii (strain DSM 271 / SK 413).